The primary structure comprises 968 residues: RNA polymerase-associated protein RapA (968 aa).

Residues 164–334 (DVGRRHAPRV…FARLRLLDPN (171 aa)) enclose the Helicase ATP-binding domain. ATP is bound at residue 177-184 (DEVGLGKT). The DEAH box motif lies at 280-283 (DEAH). Positions 490–662 (RVEWLMGYLT…YLASPDQTEG (173 aa)) constitute a Helicase C-terminal domain.

The protein belongs to the SNF2/RAD54 helicase family. RapA subfamily. As to quaternary structure, interacts with the RNAP. Has a higher affinity for the core RNAP than for the holoenzyme. Its ATPase activity is stimulated by binding to RNAP.

Functionally, transcription regulator that activates transcription by stimulating RNA polymerase (RNAP) recycling in case of stress conditions such as supercoiled DNA or high salt concentrations. Probably acts by releasing the RNAP, when it is trapped or immobilized on tightly supercoiled DNA. Does not activate transcription on linear DNA. Probably not involved in DNA repair. The protein is RNA polymerase-associated protein RapA of Escherichia coli O139:H28 (strain E24377A / ETEC).